Consider the following 534-residue polypeptide: NAD(P)H-quinone oxidoreductase chain 4 (534 aa).

Transmembrane regions (helical) follow at residues 12-32, 44-64, 94-114, 120-140, 144-164, 176-196, 220-240, 251-271, 285-305, 314-334, 340-360, 384-404, 425-445, and 472-492; these read FPWL…IPFF, FALS…INGF, ISMP…LAAW, PKLF…VFAV, LLFF…LAIW, FIIY…AMGF, ILCY…VPLH, TAPV…YALL, FAPL…LTSF, IAYS…SFSS, AMLQ…LVGA, FALW…SGFV, VIMA…LLSM, and VYII…PRLV.

Belongs to the complex I subunit 4 family.

It localises to the cellular thylakoid membrane. It carries out the reaction a plastoquinone + NADH + (n+1) H(+)(in) = a plastoquinol + NAD(+) + n H(+)(out). The catalysed reaction is a plastoquinone + NADPH + (n+1) H(+)(in) = a plastoquinol + NADP(+) + n H(+)(out). NDH-1 shuttles electrons from NAD(P)H, via FMN and iron-sulfur (Fe-S) centers, to quinones in the respiratory chain. The immediate electron acceptor for the enzyme in this species is believed to be plastoquinone. Couples the redox reaction to proton translocation (for every two electrons transferred, four hydrogen ions are translocated across the cytoplasmic membrane), and thus conserves the redox energy in a proton gradient. The protein is NAD(P)H-quinone oxidoreductase chain 4 of Prochlorococcus marinus (strain MIT 9312).